Here is a 375-residue protein sequence, read N- to C-terminus: Carbamoyl phosphate synthase small chain (375 aa).

A CPSase region spans residues 1–184 (MVSLYLENGL…LDYKPFDEKI (184 aa)). L-glutamine contacts are provided by Ser44, Gly240, and Gly242. The Glutamine amidotransferase type-1 domain occupies 188–375 (IIAVLDFGAK…KEFVGLLEGF (188 aa)). Cys268 serves as the catalytic Nucleophile. The L-glutamine site is built by Leu269, Gln272, Asn310, and Tyr313. Catalysis depends on residues His351 and Glu353.

It belongs to the CarA family. Composed of two chains; the small (or glutamine) chain promotes the hydrolysis of glutamine to ammonia, which is used by the large (or ammonia) chain to synthesize carbamoyl phosphate. Tetramer of heterodimers (alpha,beta)4.

The catalysed reaction is hydrogencarbonate + L-glutamine + 2 ATP + H2O = carbamoyl phosphate + L-glutamate + 2 ADP + phosphate + 2 H(+). The enzyme catalyses L-glutamine + H2O = L-glutamate + NH4(+). It participates in amino-acid biosynthesis; L-arginine biosynthesis; carbamoyl phosphate from bicarbonate: step 1/1. Its pathway is pyrimidine metabolism; UMP biosynthesis via de novo pathway; (S)-dihydroorotate from bicarbonate: step 1/3. Its function is as follows. Small subunit of the glutamine-dependent carbamoyl phosphate synthetase (CPSase). CPSase catalyzes the formation of carbamoyl phosphate from the ammonia moiety of glutamine, carbonate, and phosphate donated by ATP, constituting the first step of 2 biosynthetic pathways, one leading to arginine and/or urea and the other to pyrimidine nucleotides. The small subunit (glutamine amidotransferase) binds and cleaves glutamine to supply the large subunit with the substrate ammonia. The chain is Carbamoyl phosphate synthase small chain from Helicobacter pylori (strain J99 / ATCC 700824) (Campylobacter pylori J99).